The sequence spans 232 residues: Aspartate/glutamate leucyltransferase (232 aa).

It belongs to the R-transferase family. Bpt subfamily.

The protein resides in the cytoplasm. The enzyme catalyses N-terminal L-glutamyl-[protein] + L-leucyl-tRNA(Leu) = N-terminal L-leucyl-L-glutamyl-[protein] + tRNA(Leu) + H(+). It carries out the reaction N-terminal L-aspartyl-[protein] + L-leucyl-tRNA(Leu) = N-terminal L-leucyl-L-aspartyl-[protein] + tRNA(Leu) + H(+). Functionally, functions in the N-end rule pathway of protein degradation where it conjugates Leu from its aminoacyl-tRNA to the N-termini of proteins containing an N-terminal aspartate or glutamate. The polypeptide is Aspartate/glutamate leucyltransferase (Vibrio vulnificus (strain YJ016)).